Here is a 469-residue protein sequence, read N- to C-terminus: MNPNQKIITIGSVSLTIATICFLMQIAILVTTVTLHFKQYECDSPANNQVMPCEPIIIERNITEIVYLTNTTIEKEICPKLVEYRNWSKPQCKITGFAPFSKDNSIRLSAGGDIWVTREPYVSCDPGKCYQFALGQGTTLDNKHSNDTIHDRTPHRTLLMNELGVPFHLGTRQVCIAWSSSSCHDGKAWLHVCVTGYDKNATASFIYDGRLVDSIGSWSKNILRTQESECVCINGTCTVVMTDGSASERADTKILFIEEGKIVHISPLSGSAQHVEECSCYPRYPGVRCVCRDNWKGSNRPIVDINVKDYSIASSYVCSGLVGDTPRKNDRSSSSYCRNPNNEKGNHGVKGWAFDDGNDVWMGRTISEESRSGYETFKVIGGWSTPNSKLQINRQVIVDSDNRSGYSGIFSVEGKSCINRCFYVELIRGREQETRVWWTSNSIVVFCGTSGTYGTGSWPDGADINLMPI.

Topologically, residues 1–9 (MNPNQKIIT) are intravirion. The chain crosses the membrane as a helical span at residues 10–30 (IGSVSLTIATICFLMQIAILV). The segment at 11-33 (GSVSLTIATICFLMQIAILVTTV) is involved in apical transport and lipid raft association. The Virion surface portion of the chain corresponds to 31–469 (TTVTLHFKQY…DGADINLMPI (439 aa)). Residues 36 to 88 (HFKQYECDSPANNQVMPCEPIIIERNITEIVYLTNTTIEKEICPKLVEYRNWS) form a hypervariable stalk region region. N-linked (GlcNAc...) asparagine; by host glycans are attached at residues asparagine 61, asparagine 70, and asparagine 86. The segment at 91-469 (QCKITGFAPF…DGADINLMPI (379 aa)) is head of neuraminidase. Cystine bridges form between cysteine 92–cysteine 417, cysteine 124–cysteine 129, cysteine 183–cysteine 230, cysteine 232–cysteine 237, cysteine 278–cysteine 291, cysteine 280–cysteine 289, cysteine 318–cysteine 337, and cysteine 421–cysteine 447. Arginine 118 serves as a coordination point for substrate. N-linked (GlcNAc...) asparagine; by host glycosylation occurs at asparagine 146. Aspartate 151 acts as the Proton donor/acceptor in catalysis. Arginine 152 lines the substrate pocket. Residues asparagine 200 and asparagine 234 are each glycosylated (N-linked (GlcNAc...) asparagine; by host). 276-277 (EE) contacts substrate. Arginine 292 is a binding site for substrate. Positions 293, 297, and 324 each coordinate Ca(2+). Arginine 371 lines the substrate pocket. The N-linked (GlcNAc...) asparagine; by host glycan is linked to asparagine 402. The active-site Nucleophile is tyrosine 406.

It belongs to the glycosyl hydrolase 34 family. As to quaternary structure, homotetramer. The cofactor is Ca(2+). In terms of processing, N-glycosylated.

It localises to the virion membrane. The protein resides in the host apical cell membrane. The enzyme catalyses Hydrolysis of alpha-(2-&gt;3)-, alpha-(2-&gt;6)-, alpha-(2-&gt;8)- glycosidic linkages of terminal sialic acid residues in oligosaccharides, glycoproteins, glycolipids, colominic acid and synthetic substrates.. With respect to regulation, inhibited by the neuraminidase inhibitors zanamivir (Relenza) and oseltamivir (Tamiflu). These drugs interfere with the release of progeny virus from infected cells and are effective against all influenza strains. Resistance to neuraminidase inhibitors is quite rare. Functionally, catalyzes the removal of terminal sialic acid residues from viral and cellular glycoconjugates. Cleaves off the terminal sialic acids on the glycosylated HA during virus budding to facilitate virus release. Additionally helps virus spread through the circulation by further removing sialic acids from the cell surface. These cleavages prevent self-aggregation and ensure the efficient spread of the progeny virus from cell to cell. Otherwise, infection would be limited to one round of replication. Described as a receptor-destroying enzyme because it cleaves a terminal sialic acid from the cellular receptors. May facilitate viral invasion of the upper airways by cleaving the sialic acid moieties on the mucin of the airway epithelial cells. Likely to plays a role in the budding process through its association with lipid rafts during intracellular transport. May additionally display a raft-association independent effect on budding. Plays a role in the determination of host range restriction on replication and virulence. Sialidase activity in late endosome/lysosome traffic seems to enhance virus replication. The polypeptide is Neuraminidase (Aves (whales)).